Consider the following 285-residue polypeptide: HTH-type transcriptional regulator HexR (285 aa).

The 77-residue stretch at 2-78 (KNLLEQIQSR…IQLAQSLASG (77 aa)) folds into the HTH rpiR-type domain. The H-T-H motif DNA-binding region spans 38-57 (IAALAQAAAVSEPTVNRFCR). The 140-residue stretch at 122–261 (AVDLLIQARQ…ATGVTLRRGV (140 aa)) folds into the SIS domain.

In terms of biological role, involved in regulation of glucose metabolism. Transcriptional repressor of the gap-1 gene and of the edd-glk-gltR-2 and zwf-pgl-eda operons. Acts by binding directly to an inverted pseudopalindromic sequence in the promoter region. This is HTH-type transcriptional regulator HexR from Pseudomonas aeruginosa (strain ATCC 15692 / DSM 22644 / CIP 104116 / JCM 14847 / LMG 12228 / 1C / PRS 101 / PAO1).